A 584-amino-acid chain; its full sequence is Phenylalanine--tRNA ligase beta subunit (584 aa).

In terms of domain architecture, B5 spans 290–369 (FSVRTKTVTH…RALGFNSLEP (80 aa)). Mg(2+)-binding residues include Asp347, Asp353, Asp356, and Asp357.

Belongs to the phenylalanyl-tRNA synthetase beta subunit family. Type 2 subfamily. In terms of assembly, tetramer of two alpha and two beta subunits. The cofactor is Mg(2+).

Its subcellular location is the cytoplasm. It catalyses the reaction tRNA(Phe) + L-phenylalanine + ATP = L-phenylalanyl-tRNA(Phe) + AMP + diphosphate + H(+). This is Phenylalanine--tRNA ligase beta subunit from Haloarcula marismortui (strain ATCC 43049 / DSM 3752 / JCM 8966 / VKM B-1809) (Halobacterium marismortui).